Consider the following 350-residue polypeptide: tRNA-splicing endonuclease (350 aa).

Catalysis depends on residues Tyr-286, His-297, and Lys-328.

The protein belongs to the tRNA-intron endonuclease family. Archaeal long subfamily. Homodimer.

It catalyses the reaction pretRNA = a 3'-half-tRNA molecule with a 5'-OH end + a 5'-half-tRNA molecule with a 2',3'-cyclic phosphate end + an intron with a 2',3'-cyclic phosphate and a 5'-hydroxyl terminus.. Its function is as follows. Endonuclease that removes tRNA introns. Cleaves pre-tRNA at the 5'- and 3'-splice sites to release the intron. The products are an intron and two tRNA half-molecules bearing 2',3' cyclic phosphate and 5'-OH termini. Recognizes a pseudosymmetric substrate in which 2 bulged loops of 3 bases are separated by a stem of 4 bp. The protein is tRNA-splicing endonuclease of Methanosarcina barkeri (strain Fusaro / DSM 804).